The following is a 282-amino-acid chain: Phosphatidylglycerol--prolipoprotein diacylglyceryl transferase (282 aa).

4 helical membrane passes run 19-39 (IGPITIRWYGLLIATAVLIGV), 59-79 (LSIWLVIGAIPAARIYYVLFQ), 90-110 (IIAIWQGGIAIHGAIIGGTLA), and 120-140 (VPFWQLADLVAPSLILGQAIG). Arg-141 is an a 1,2-diacyl-sn-glycero-3-phospho-(1'-sn-glycerol) binding site. A run of 3 helical transmembrane segments spans residues 181–201 (TFLYESIWDLMVFALLITLFF), 212–232 (VGTLFMVYLATYSLGRLWIEG), and 245–265 (IAQVVSLTGITLGLAGLAWLY).

This sequence belongs to the Lgt family.

The protein resides in the cell inner membrane. It catalyses the reaction L-cysteinyl-[prolipoprotein] + a 1,2-diacyl-sn-glycero-3-phospho-(1'-sn-glycerol) = an S-1,2-diacyl-sn-glyceryl-L-cysteinyl-[prolipoprotein] + sn-glycerol 1-phosphate + H(+). The protein operates within protein modification; lipoprotein biosynthesis (diacylglyceryl transfer). Functionally, catalyzes the transfer of the diacylglyceryl group from phosphatidylglycerol to the sulfhydryl group of the N-terminal cysteine of a prolipoprotein, the first step in the formation of mature lipoproteins. This is Phosphatidylglycerol--prolipoprotein diacylglyceryl transferase from Trichormus variabilis (strain ATCC 29413 / PCC 7937) (Anabaena variabilis).